The following is a 141-amino-acid chain: Large ribosomal subunit protein uL11 (141 aa).

This sequence belongs to the universal ribosomal protein uL11 family. As to quaternary structure, part of the ribosomal stalk of the 50S ribosomal subunit. Interacts with L10 and the large rRNA to form the base of the stalk. L10 forms an elongated spine to which L12 dimers bind in a sequential fashion forming a multimeric L10(L12)X complex. In terms of processing, one or more lysine residues are methylated.

Forms part of the ribosomal stalk which helps the ribosome interact with GTP-bound translation factors. This Prochlorococcus marinus (strain NATL1A) protein is Large ribosomal subunit protein uL11.